A 551-amino-acid chain; its full sequence is Hedycaryol synthase TPS20CT (551 aa).

(2E,6E)-farnesyl diphosphate contacts are provided by Arg-266, Asp-303, Asp-307, Arg-444, and Asp-447. Mg(2+)-binding residues include Asp-303 and Asp-307. The DDXXD motif motif lies at 303-307 (DDIYD). The Mg(2+) site is built by Asp-447, Ser-451, and Glu-455.

It belongs to the terpene synthase family. Tpsb subfamily. It depends on Mg(2+) as a cofactor. Requires Mn(2+) as cofactor. In terms of tissue distribution, highly expressed in glandular trichomes.

It catalyses the reaction (2E,6E)-farnesyl diphosphate + H2O = (2E,6E)-hedycaryol + diphosphate. Its pathway is secondary metabolite biosynthesis; terpenoid biosynthesis. Its function is as follows. Involved in sesquiterpene olefins biosynthesis, constituants of cannabinoids and terpenoids-rich resins. Catalyzes primarily the conversion of (2E)-farnesyl diphosphate to hedycaryol, which is spontaneously converted to elemol as a thermal degradation product. The chain is Hedycaryol synthase TPS20CT from Cannabis sativa (Hemp).